A 221-amino-acid chain; its full sequence is Large ribosomal subunit protein uL16y (221 aa).

It belongs to the universal ribosomal protein uL16 family. In terms of assembly, component of the small ribosomal subunit. Mature ribosomes consist of a small (40S) and a large (60S) subunit. The 40S subunit contains about 33 different proteins and 1 molecule of RNA (18S). The 60S subunit contains about 49 different proteins and 3 molecules of RNA (25S, 5.8S and 5S).

In Arabidopsis thaliana (Mouse-ear cress), this protein is Large ribosomal subunit protein uL16y (RPL10B).